The chain runs to 243 residues: Putative C-type lectin protein A7 (243 aa).

A helical membrane pass occupies residues 23-43 (IFFILAATNLMIAAFALGCLA). One can recognise a C-type lectin domain in the interval 116 to 223 (GQKACYYVPP…CTTSKLCLCG (108 aa)). Cystine bridges form between C137–C222 and C198–C214.

It is found in the host membrane. This Alcelaphine herpesvirus 1 (strain C500) (AlHV-1) protein is Putative C-type lectin protein A7 (A7).